The sequence spans 355 residues: Receptor-like serine/threonine-protein kinase At1g78530 (355 aa).

At M1–T8 the chain is on the extracellular side. Residues F9–F29 form a helical membrane-spanning segment. At Y30–F355 the chain is on the cytoplasmic side. The 273-residue stretch at L75–I347 folds into the Protein kinase domain. ATP contacts are provided by residues L81–V89 and K103. Y148 carries the post-translational modification Phosphotyrosine. D197 serves as the catalytic Proton acceptor. S201 and S230 each carry phosphoserine. T231 and T236 each carry phosphothreonine. At Y244 the chain carries Phosphotyrosine.

It belongs to the protein kinase superfamily. Ser/Thr protein kinase family.

The protein localises to the cell membrane. The catalysed reaction is L-seryl-[protein] + ATP = O-phospho-L-seryl-[protein] + ADP + H(+). It carries out the reaction L-threonyl-[protein] + ATP = O-phospho-L-threonyl-[protein] + ADP + H(+). The protein is Receptor-like serine/threonine-protein kinase At1g78530 of Arabidopsis thaliana (Mouse-ear cress).